The chain runs to 431 residues: Shaggy-related protein kinase beta (431 aa).

A compositionally biased stretch (polar residues) spans 12–24; sequence SGRNFVSSDNVGE. A disordered region spans residues 12–65; sequence SGRNFVSSDNVGETETPRSKPNQNREETESTETTSYEKDSVSSSENSDHLPKEI. 2 stretches are compositionally biased toward basic and acidic residues: residues 26 to 39 and 46 to 65; these read ETPR…REET and SYEK…PKEI. Positions 102–386 constitute a Protein kinase domain; the sequence is YRAEHVIGTG…ALEACAHPFF (285 aa). ATP-binding positions include 108 to 116 and Lys131; that span reads IGTGSFGVV. Residue Asp227 is the Proton acceptor of the active site. The residue at position 262 (Tyr262) is a Phosphotyrosine.

It belongs to the protein kinase superfamily. CMGC Ser/Thr protein kinase family. GSK-3 subfamily. In terms of processing, autophosphorylated mainly on threonine and serine residues.

The catalysed reaction is L-seryl-[protein] + ATP = O-phospho-L-seryl-[protein] + ADP + H(+). It carries out the reaction L-threonyl-[protein] + ATP = O-phospho-L-threonyl-[protein] + ADP + H(+). Its function is as follows. May mediate extracellular signals to regulate transcription in differentiating cells. In Arabidopsis thaliana (Mouse-ear cress), this protein is Shaggy-related protein kinase beta.